The following is a 309-amino-acid chain: Sulfate adenylyltransferase subunit 2 (309 aa).

This sequence belongs to the PAPS reductase family. CysD subfamily. In terms of assembly, heterodimer composed of CysD, the smaller subunit, and CysN.

The catalysed reaction is sulfate + ATP + H(+) = adenosine 5'-phosphosulfate + diphosphate. Its pathway is sulfur metabolism; hydrogen sulfide biosynthesis; sulfite from sulfate: step 1/3. Functionally, with CysN forms the ATP sulfurylase (ATPS) that catalyzes the adenylation of sulfate producing adenosine 5'-phosphosulfate (APS) and diphosphate, the first enzymatic step in sulfur assimilation pathway. APS synthesis involves the formation of a high-energy phosphoric-sulfuric acid anhydride bond driven by GTP hydrolysis by CysN coupled to ATP hydrolysis by CysD. The polypeptide is Sulfate adenylyltransferase subunit 2 (Mycolicibacterium gilvum (strain PYR-GCK) (Mycobacterium gilvum (strain PYR-GCK))).